The chain runs to 707 residues: ATP-dependent zinc metalloprotease FtsH (707 aa).

At 1 to 25 (MSELDNKKDKSKDSNKKPKKPGAFS) the chain is on the cytoplasmic side. A helical transmembrane segment spans residues 26–46 (IGNIIIFVIVALLLIWVVFAF). Residues 47–128 (LPNNPGTNKS…GTTFTGLELA (82 aa)) are Extracellular-facing. The helical transmembrane segment at 129–149 (TLAIANTSASGIGTLNFSGLV) threads the bilayer. At 150-707 (TPTNQALAIL…IKTDESLDIK (558 aa)) the chain is on the cytoplasmic side. 246–253 (GPPGTGKT) is a binding site for ATP. His-468 is a Zn(2+) binding site. Residue Glu-469 is part of the active site. Residues His-472 and Asp-546 each coordinate Zn(2+).

In the central section; belongs to the AAA ATPase family. It in the C-terminal section; belongs to the peptidase M41 family. Homohexamer. Requires Zn(2+) as cofactor.

It is found in the cell membrane. Its function is as follows. Acts as a processive, ATP-dependent zinc metallopeptidase for both cytoplasmic and membrane proteins. Plays a role in the quality control of integral membrane proteins. In Mycoplasma mobile (strain ATCC 43663 / 163K / NCTC 11711) (Mesomycoplasma mobile), this protein is ATP-dependent zinc metalloprotease FtsH.